The chain runs to 596 residues: Deuterosome assembly protein 1 (596 aa).

Coiled coils occupy residues 8-68, 130-180, and 227-284; these read IARN…NHEI, CELQ…FQKE, and IENL…DLLR. The segment covering 297 to 306 has biased composition (polar residues); sequence TANLANQKTA. Residues 297 to 316 form a disordered region; sequence TANLANQKTAQGEEASFQVT. Positions 337 to 402 form a coiled coil; it reads SEKYQAENDL…LKGAQNRQTS (66 aa). The tract at residues 447–467 is disordered; the sequence is DKPQKHRSFHGENNSLKPTNY. A compositionally biased stretch (polar residues) spans 457-467; the sequence is GENNSLKPTNY.

Belongs to the CEP63 family.

The protein localises to the cytoplasm. Its function is as follows. Key structural component of the deuterosome, a structure that promotes de novo centriole amplification in multiciliated cells. Deuterosome-mediated centriole amplification occurs in terminally differentiated multiciliated cells and can generate more than 100 centrioles. Probably sufficient for the specification and formation of the deuterosome inner core. The sequence is that of Deuterosome assembly protein 1 from Xenopus tropicalis (Western clawed frog).